The primary structure comprises 181 residues: Protein Syd (181 aa).

The protein belongs to the Syd family.

The protein localises to the cell inner membrane. Functionally, interacts with the SecY protein in vivo. May bind preferentially to an uncomplexed state of SecY, thus functioning either as a chelating agent for excess SecY in the cell or as a regulatory factor that negatively controls the translocase function. The polypeptide is Protein Syd (Escherichia coli O157:H7).